The following is a 276-amino-acid chain: Beta-lactamase OXA-1 (276 aa).

The N-terminal stretch at 1–25 is a signal peptide; that stretch reads MKNTIHINFAIFLIIANIIYSSASA. Residue Ser71 is the Acyl-ester intermediate of the active site. A beta-lactam is bound by residues Ser71, Lys74, Ser118, Thr216, and Ala218. Position 74 is an N6-carboxylysine (Lys74).

This sequence belongs to the class-D beta-lactamase family. In terms of assembly, monomer.

Its subcellular location is the periplasm. It catalyses the reaction a beta-lactam + H2O = a substituted beta-amino acid. With respect to regulation, inhibited by penicillin sulfones. Only weakly inhibited by clavulanic acid and sulbactam. Class D beta-lactamase which confers resistance to the beta-lactam antibiotics, including amoxicillin and ticarcillin. Acts via hydrolysis of the beta-lactam ring. Has penicillin- and cephalosporin-hydrolyzing activities. The polypeptide is Beta-lactamase OXA-1 (Escherichia coli).